Here is a 383-residue protein sequence, read N- to C-terminus: Protein salvador homolog 1 (383 aa).

Phosphoserine is present on residues S94 and S136. 2 WW domains span residues 199 to 232 (LPLPPGWSVDWTMRGRKYYIDHNTNTTHWSHPLE) and 234 to 267 (EGLPPGWERVESSEFGTYYVDHTNKKAQYRHPCA). T210 is modified (phosphothreonine). One can recognise an SARAH domain in the interval 321-368 (ILKWELFQLADLDTYQGMLKLLFMKELEQIVKMYEAYRQALLTELENR). Residues 344–373 (MKELEQIVKMYEAYRQALLTELENRKQRQQ) are a coiled coil.

As to quaternary structure, homodimer. Stabilized through interaction with STK3/MST2 or STK4/MST1. Interacts (via SARAH domain) with isoform 1 of NEK2. Interacts with ESR1 only in the presence of STK3/MST2. Interacts with WTIP and AJUBA. Phosphorylated by STK3/MST2 and STK4/MST1. Phosphorylation is not required for SAV1 stability and may increase the number of protein binding sites on the scaffold molecule. Ubiquitously expressed in adult tissues with highest expression in the pancreas, aorta and interventricular septum and lowest expression in skeletal muscle. Expression was higher in fetal than in the adult heart. Expressed in various cell lines.

It localises to the nucleus. It is found in the cytoplasm. In terms of biological role, regulator of STK3/MST2 and STK4/MST1 in the Hippo signaling pathway which plays a pivotal role in organ size control and tumor suppression by restricting proliferation and promoting apoptosis. The core of this pathway is composed of a kinase cascade wherein STK3/MST2 and STK4/MST1, in complex with its regulatory protein SAV1, phosphorylates and activates LATS1/2 in complex with its regulatory protein MOB1, which in turn phosphorylates and inactivates YAP1 oncoprotein and WWTR1/TAZ. Phosphorylation of YAP1 by LATS1/2 inhibits its translocation into the nucleus to regulate cellular genes important for cell proliferation, cell death, and cell migration. SAV1 is required for STK3/MST2 and STK4/MST1 activation and promotes cell-cycle exit and terminal differentiation in developing epithelial tissues. Plays a role in centrosome disjunction by regulating the localization of NEK2 to centrosomes, and its ability to phosphorylate CROCC and CEP250. In conjunction with STK3/MST2, activates the transcriptional activity of ESR1 through the modulation of its phosphorylation. This Homo sapiens (Human) protein is Protein salvador homolog 1.